Reading from the N-terminus, the 361-residue chain is uncharacterized protein (361 aa).

Over residues Met-1–Pro-10 the composition is skewed to basic residues. 2 disordered regions span residues Met-1 to His-82 and Ala-94 to Ser-147. Basic and acidic residues-rich tracts occupy residues Lys-44–Asn-57 and Phe-120–Leu-134. Residues Gln-135–Ser-147 are compositionally biased toward polar residues. A coiled-coil region spans residues Asn-295 to Asp-349.

It localises to the cytoplasm. Its subcellular location is the nucleus. This is an uncharacterized protein from Schizosaccharomyces pombe (strain 972 / ATCC 24843) (Fission yeast).